A 563-amino-acid chain; its full sequence is Coiled-coil domain-containing protein 38 (563 aa).

Polar residues predominate over residues 1-11 (MSSNLLPTLNS). The disordered stretch occupies residues 1-21 (MSSNLLPTLNSGGKVKDGSTK). The stretch at 129 to 212 (KRNTIKKFEK…VKSEIAKTEF (84 aa)) forms a coiled coil. Residues 272 to 311 (ESGRTAVLSEDASQGRDSQGKPSRSLTRTPEKKKSNLAES) form a disordered region. The segment covering 282–299 (DASQGRDSQGKPSRSLTR) has biased composition (polar residues). 2 coiled-coil regions span residues 384-415 (NIEF…KSKL) and 497-522 (RDEK…AVAQ). The disordered stretch occupies residues 522 to 563 (QPKKKLGRRLVFHSKPPSGNKQQLPLVNETKTKSQEEEYFFT). The segment covering 523 to 533 (PKKKLGRRLVF) has biased composition (basic residues).

As to quaternary structure, interacts with CCDC42, CFAP53, IFT88 and ODF2. Interacts with CCDC146. Interacts with TEKT3. Interacts with ubiquitinated histone H2A.

The protein resides in the cytoplasm. It is found in the cytoskeleton. The protein localises to the microtubule organizing center. It localises to the centrosome. Its subcellular location is the perinuclear region. The protein resides in the cell projection. It is found in the cilium. The protein localises to the flagellum. In terms of biological role, essential for male fertility. Required for sperm flagellum biogenesis. Also required for acrosome biogenesis. Required for the attachment of developing acrosomes to the nucleus during spermiogenesis and may be involved in the transport of fibrous sheath components. This Homo sapiens (Human) protein is Coiled-coil domain-containing protein 38 (CCDC38).